Reading from the N-terminus, the 143-residue chain is Cofilin (143 aa).

The 133-residue stretch at 5 to 137 (GVAVADESLT…AYESVLEKVS (133 aa)) folds into the ADF-H domain.

It belongs to the actin-binding proteins ADF family.

The protein resides in the cytoplasm. It is found in the cytoskeleton. It localises to the nucleus matrix. Its function is as follows. Controls reversibly actin polymerization and depolymerization in a pH-sensitive manner. It has the ability to bind G- and F-actin in a 1:1 ratio of cofilin to actin. Binding to F-actin is regulated by tropomyosin. It is the major component of intranuclear and cytoplasmic actin rods. Required for accumulation of actin at the cell division site via depolymerizing actin at the cell ends. In association with myosin II has a role in the assembly of the contractile ring via severing actin filaments. Involved in the maintenance of the contractile ring once formed. In association with profilin and capping protein, has a role in the mitotic reorganization of the actin cytoskeleton. In Eremothecium gossypii (strain ATCC 10895 / CBS 109.51 / FGSC 9923 / NRRL Y-1056) (Yeast), this protein is Cofilin (COF1).